We begin with the raw amino-acid sequence, 460 residues long: N-myc proto-oncogene protein (460 aa).

An interaction with AURKA region spans residues 19 to 47 (LEFDSLQPCFYPDEDDFYFGGPDSTPPGE). Residues 61 to 90 (LSPSRAFSEQSPEPSDWATEMLLPEADLWG) form an interaction with AURKA and FBXW7 region. Positions 76–85 (DWATEMLLPE) match the 9aaTAD motif. Disordered regions lie at residues 131-169 (VSEKLQHGRGPPAAGPATPGAGAANPAGRGHGGTAGAGR), 221-288 (AAAP…SNSK), and 330-388 (APSP…LERQ). A compositionally biased stretch (low complexity) spans 138–158 (GRGPPAAGPATPGAGAANPAG). A compositionally biased stretch (gly residues) spans 159 to 169 (RGHGGTAGAGR). The segment covering 221-233 (AAAPASAAVAAPP) has biased composition (low complexity). The segment covering 255–274 (TLSDSDDEDDEEEDEEEEID) has biased composition (acidic residues). Phosphoserine; by CK2 occurs at positions 257 and 259. One can recognise a bHLH domain in the interval 377–429 (ERRRNHNILERQRRNDLRSSFLTLRDHVPELVKNEKAAKVVILKKATEYVHSL). Positions 429-450 (LQAEEHQLLLEKEKLQARQQQL) are leucine-zipper.

In terms of assembly, efficient DNA binding requires dimerization with another bHLH protein. Binds DNA as a heterodimer with MAX. Interacts with KDM5A, KDM5B and HUWE1. Interacts with MYCNOS. Interacts with AURKA; interaction is phospho-independent and triggers AURKA activation; AURKA competes with FBXW7 for binding to unphosphorylated MYCN but not for binding to unphosphorylated MYCN. Interacts with FBXW7; FBXW7 competes with AURKA for binding to unphosphorylated MYCN but not for binding to phosphorylated MYCN. In terms of processing, phosphorylated by GSK3-beta which may promote its degradation. Phosphorylated by AURKA.

It is found in the nucleus. Its function is as follows. Positively regulates the transcription of MYCNOS in neuroblastoma cells. The chain is N-myc proto-oncogene protein (MYCN) from Marmota monax (Woodchuck).